The chain runs to 388 residues: Succinate--CoA ligase [ADP-forming] subunit beta (388 aa).

Residues 9 to 244 enclose the ATP-grasp domain; it reads KALFAEYGLP…PSQDDAREAH (236 aa). Residues lysine 46, 53 to 55, glutamate 99, threonine 102, and glutamate 107 each bind ATP; that span reads GRG. 2 residues coordinate Mg(2+): asparagine 199 and aspartate 213. Residues asparagine 264 and 321–323 contribute to the substrate site; that span reads GIV.

Belongs to the succinate/malate CoA ligase beta subunit family. Heterotetramer of two alpha and two beta subunits. Mg(2+) serves as cofactor.

The enzyme catalyses succinate + ATP + CoA = succinyl-CoA + ADP + phosphate. It carries out the reaction GTP + succinate + CoA = succinyl-CoA + GDP + phosphate. It participates in carbohydrate metabolism; tricarboxylic acid cycle; succinate from succinyl-CoA (ligase route): step 1/1. Its function is as follows. Succinyl-CoA synthetase functions in the citric acid cycle (TCA), coupling the hydrolysis of succinyl-CoA to the synthesis of either ATP or GTP and thus represents the only step of substrate-level phosphorylation in the TCA. The beta subunit provides nucleotide specificity of the enzyme and binds the substrate succinate, while the binding sites for coenzyme A and phosphate are found in the alpha subunit. The chain is Succinate--CoA ligase [ADP-forming] subunit beta from Shewanella halifaxensis (strain HAW-EB4).